A 510-amino-acid polypeptide reads, in one-letter code: Pentatricopeptide repeat-containing protein At1g71060, mitochondrial (510 aa).

The transit peptide at 1 to 14 (MVFSRFFRVTGVNL) directs the protein to the mitochondrion. 10 PPR repeats span residues 127–157 (TTSNYNALIESLGKIKQFKLIWSLVDDMKAK), 161–195 (SKETFALISRRYARARKVKEAIGAFHKMEEFGFKM), 196–230 (ESSDFNRMLDTLSKSRNVGDAQKVFDKMKKKRFEP), 231–265 (DIKSYTILLEGWGQELNLLRVDEVNREMKDEGFEP), 266–300 (DVVAYGIIINAHCKAKKYEEAIRFFNEMEQRNCKP), 301–335 (SPHIFCSLINGLGSEKKLNDALEFFERSKSSGFPL), 336–370 (EAPTYNALVGAYCWSQRMEDAYKTVDEMRLKGVGP), 371–401 (NARTYDIILHHLIRMQRSKEAYEVYQTMSCE), 403–437 (TVSTYEIMVRMFCNKERLDMAIKIWDEMKGKGVLP), and 438–472 (GMHMFSSLITALCHENKLDEACEYFNEMLDVGIRP).

The protein belongs to the PPR family. P subfamily.

Its subcellular location is the mitochondrion. In Arabidopsis thaliana (Mouse-ear cress), this protein is Pentatricopeptide repeat-containing protein At1g71060, mitochondrial.